We begin with the raw amino-acid sequence, 287 residues long: 4-hydroxybenzoate octaprenyltransferase (287 aa).

7 helical membrane passes run 30–50 (ALWI…FALG), 92–112 (IAIA…LNGL), 133–153 (FFAI…PMAF), 158–178 (DTVP…SVAY), 207–227 (VLAI…LGAA), 232–252 (WPYW…YTLI), and 266–286 (HNNW…ALAV).

Belongs to the UbiA prenyltransferase family. It depends on Mg(2+) as a cofactor.

Its subcellular location is the cell inner membrane. It carries out the reaction all-trans-octaprenyl diphosphate + 4-hydroxybenzoate = 4-hydroxy-3-(all-trans-octaprenyl)benzoate + diphosphate. It functions in the pathway cofactor biosynthesis; ubiquinone biosynthesis. Functionally, catalyzes the prenylation of para-hydroxybenzoate (PHB) with an all-trans polyprenyl group. Mediates the second step in the final reaction sequence of ubiquinone-8 (UQ-8) biosynthesis, which is the condensation of the polyisoprenoid side chain with PHB, generating the first membrane-bound Q intermediate 3-octaprenyl-4-hydroxybenzoate. The sequence is that of 4-hydroxybenzoate octaprenyltransferase from Burkholderia mallei (strain NCTC 10247).